We begin with the raw amino-acid sequence, 263 residues long: Alpha-tubulin N-acetyltransferase 2 (263 aa).

One can recognise an N-acetyltransferase domain in the interval 1–181 (MEIAFDLSSI…NKYAVFPNFF (181 aa)). Position 115-128 (115-128 (FFIVPTEQRSGNGF)) interacts with acetyl-CoA. 2 disordered regions span residues 191–224 (TPRQ…RPRH) and 236–263 (FPRG…EPIW). A compositionally biased stretch (low complexity) spans 200–212 (RASSAVSSHTTSR). Over residues 253–263 (LTRDQRHEPIW) the composition is skewed to basic and acidic residues.

It belongs to the acetyltransferase ATAT1 family.

It carries out the reaction L-lysyl-[alpha-tubulin] + acetyl-CoA = N(6)-acetyl-L-lysyl-[alpha-tubulin] + CoA + H(+). Specifically acetylates 'Lys-40' in alpha-tubulin/mec-12 on the lumenal side of microtubules. Promotes microtubule destabilization and accelerates microtubule dynamics; this activity may be independent of acetylation activity. Acetylates alpha-tubulin with a slow enzymatic rate, due to a catalytic site that is not optimized for acetyl transfer. Enters the microtubule through each end and diffuses quickly throughout the lumen of microtubules. Acetylates only long/old microtubules because of its slow acetylation rate since it does not have time to act on dynamically unstable microtubules before the enzyme is released. Required for the maintenance of touch receptor neurons and possibly other type of neurons involved in locomotion. This is Alpha-tubulin N-acetyltransferase 2 (atat-2) from Caenorhabditis briggsae.